The primary structure comprises 264 residues: tRNA pseudouridine synthase A (264 aa).

D51 (nucleophile) is an active-site residue. Y109 provides a ligand contact to substrate.

This sequence belongs to the tRNA pseudouridine synthase TruA family. As to quaternary structure, homodimer.

It carries out the reaction uridine(38/39/40) in tRNA = pseudouridine(38/39/40) in tRNA. Functionally, formation of pseudouridine at positions 38, 39 and 40 in the anticodon stem and loop of transfer RNAs. This Vibrio atlanticus (strain LGP32) (Vibrio splendidus (strain Mel32)) protein is tRNA pseudouridine synthase A.